Consider the following 117-residue polypeptide: Gamma-aminobutyric acid receptor-associated protein-like 3 (117 aa).

The interval 1-22 (MKFQYKEVHPFEYRKKEGEKIR) is interaction with beta-tubulin. The interval 36-68 (APKARVPDLDRRKYLVPSDLTDGQFYLLIRKRI) is interaction with GABRG2. Residue Gly116 is the site of Phosphatidylethanolamine amidated glycine attachment. Lys117 is a propeptide (removed in mature form).

The protein belongs to the ATG8 family. In terms of assembly, interacts with GABRG2 and beta-tubulin. The precursor molecule is cleaved by ATG4B to form the cytosolic form, GABARAPL3-I. This is activated by APG7L/ATG7, transferred to ATG3 and conjugated to phospholipid to form the membrane-bound form, GABARAPL3-II. ATG4B also mediates the delipidation required for GABARAPL1 recycling when autophagosomes fuse with lysosomes. As to expression, ubiquitous. Expressed at very high levels in the brain, heart, peripheral blood leukocytes, liver, kidney, placenta and skeletal muscle. Expressed at very low levels in thymus and small intestine.

The protein resides in the cytoplasm. It localises to the cytoskeleton. The protein localises to the cytoplasmic vesicle. Its subcellular location is the autophagosome membrane. Its function is as follows. Ubiquitin-like modifier involved in autophagosome formation. Whereas LC3s are involved in elongation of the phagophore membrane, the GABARAP/GATE-16 subfamily is essential for a later stage in autophagosome maturation. The protein is Gamma-aminobutyric acid receptor-associated protein-like 3 (GABARAPL3) of Homo sapiens (Human).